The chain runs to 74 residues: DNA-directed RNA polymerase subunit omega (74 aa).

Belongs to the RNA polymerase subunit omega family. The RNAP catalytic core consists of 2 alpha, 1 beta, 1 beta' and 1 omega subunit. When a sigma factor is associated with the core the holoenzyme is formed, which can initiate transcription.

The catalysed reaction is RNA(n) + a ribonucleoside 5'-triphosphate = RNA(n+1) + diphosphate. Promotes RNA polymerase assembly. Latches the N- and C-terminal regions of the beta' subunit thereby facilitating its interaction with the beta and alpha subunits. This chain is DNA-directed RNA polymerase subunit omega, found in Marinomonas sp. (strain MWYL1).